A 1387-amino-acid chain; its full sequence is Dicer-like protein 2-1 (1387 aa).

The Helicase ATP-binding domain maps to 26–205; that stretch reads MFEASLKENI…LLKIESNLDA (180 aa). An ATP-binding site is contributed by 39-46; that stretch reads MGTGSGKT. The DEAH box signature appears at 146–149; it reads DEAH. A Helicase C-terminal domain is found at 370–535; it reads KFRSLLEFLD…AYEDDERRLR (166 aa). A Dicer dsRNA-binding fold domain is found at 565-659; sequence AVAHLNHFCA…LPFKRNLELK (95 aa). 2 RNase III domains span residues 915–1055 and 1094–1277; these read ATRL…IDGG and DDHL…IDSH. 3 residues coordinate Mg(2+): Glu1133, Asp1263, and Glu1266.

The protein belongs to the helicase family. Dicer subfamily. Mg(2+) is required as a cofactor. The cofactor is Mn(2+).

Functionally, dicer-like endonuclease involved in cleaving double-stranded RNA in the RNA interference (RNAi) pathway. Produces 21 to 25 bp dsRNAs (siRNAs) which target the selective destruction of homologous RNAs leading to sequence-specific suppression of gene expression, called post-transcriptional gene silencing (PTGS). Part of a broad host defense response against viral infection and transposons. The chain is Dicer-like protein 2-1 (dcl2-1) from Aspergillus niger (strain ATCC MYA-4892 / CBS 513.88 / FGSC A1513).